The following is a 263-amino-acid chain: GTP cyclohydrolase 1 type 2 homolog (263 aa).

A divalent metal cation contacts are provided by His-65, His-66, Asp-104, His-225, and Glu-229.

Belongs to the GTP cyclohydrolase I type 2/NIF3 family. As to quaternary structure, homohexamer.

This chain is GTP cyclohydrolase 1 type 2 homolog, found in Nostoc sp. (strain PCC 7120 / SAG 25.82 / UTEX 2576).